The following is a 396-amino-acid chain: Bone morphogenetic protein 2 (396 aa).

The signal sequence occupies residues 1–23; that stretch reads MVAGTRCLLALLLPQVLLGGAAG. Residues 24–282 constitute a propeptide, cleaved by PCSK5; the sequence is LVPELGRRKF…GHPLHKREKR (259 aa). The disordered stretch occupies residues 84–121; it reads RRHSGQPGSPAPDHRLERAASRANTVRSFHHEESLEEL. At Ser87 the chain carries Phosphoserine. N-linked (GlcNAc...) asparagine glycans are attached at residues Asn135, Asn163, Asn164, and Asn200. Positions 271-293 are disordered; it reads GKGHPLHKREKRQAKHKQRKRLK. Positions 274-293 are enriched in basic residues; that stretch reads HPLHKREKRQAKHKQRKRLK. Intrachain disulfides connect Cys296–Cys361, Cys325–Cys393, and Cys329–Cys395. Asn338 is a glycosylation site (N-linked (GlcNAc...) (high mannose) asparagine).

Belongs to the TGF-beta family. As to quaternary structure, homodimer; disulfide-linked. Interacts with SOSTDC1. Interacts with GREM2, RGMA, RGMB and RGMC. Interacts with ASPN. Interacts with MAFP5. Interacts with FBN1 (via N-terminal domain) and FBN2. Interacts with type I receptor BMPR1A. Interacts with type II receptor BMPR2. Interacts with SCUBE3. Interacts with TNFAIP6 (primarily via Link domain); this interaction is inhibited by hyaluronan. Interacts with ERFE. Interacts with BMPR1A/ALK3; the interaction may induce HAMP expression. Forms heterodimers with BMP6 in vitro; the heterodimer then binds to its receptor BMPR1A /ALK3 and may induce HAMP expression. Interacts with TGFBR3. As to expression, particularly abundant in lung, spleen and colon and in low but significant levels in heart, brain, placenta, liver, skeletal muscle, kidney, pancreas, prostate, ovary and small intestine.

Its subcellular location is the secreted. Functionally, growth factor of the TGF-beta superfamily that plays essential roles in many developmental processes, including cardiogenesis, neurogenesis, and osteogenesis. Induces cartilage and bone formation. Initiates the canonical BMP signaling cascade by associating with type I receptor BMPR1A and type II receptor BMPR2. Once all three components are bound together in a complex at the cell surface, BMPR2 phosphorylates and activates BMPR1A. In turn, BMPR1A propagates signal by phosphorylating SMAD1/5/8 that travel to the nucleus and act as activators and repressors of transcription of target genes. Also acts to promote expression of HAMP, via the interaction with its receptor BMPR1A/ALK3. Can also signal through non-canonical pathways such as ERK/MAP kinase signaling cascade that regulates osteoblast differentiation. Also stimulates the differentiation of myoblasts into osteoblasts via the EIF2AK3-EIF2A-ATF4 pathway by stimulating EIF2A phosphorylation which leads to increased expression of ATF4 which plays a central role in osteoblast differentiation. Acts as a positive regulator of odontoblast differentiation during mesenchymal tooth germ formation, expression is repressed during the bell stage by MSX1-mediated inhibition of CTNNB1 signaling. This is Bone morphogenetic protein 2 (BMP2) from Homo sapiens (Human).